The sequence spans 689 residues: Glycine--tRNA ligase beta subunit (689 aa).

Belongs to the class-II aminoacyl-tRNA synthetase family. Tetramer of two alpha and two beta subunits.

The protein localises to the cytoplasm. The catalysed reaction is tRNA(Gly) + glycine + ATP = glycyl-tRNA(Gly) + AMP + diphosphate. This Acinetobacter baumannii (strain ATCC 17978 / DSM 105126 / CIP 53.77 / LMG 1025 / NCDC KC755 / 5377) protein is Glycine--tRNA ligase beta subunit.